Here is a 70-residue protein sequence, read N- to C-terminus: uncharacterized protein (70 aa).

This is an uncharacterized protein from Homo sapiens (Human).